Consider the following 296-residue polypeptide: 4-hydroxy-tetrahydrodipicolinate synthase (296 aa).

Threonine 49 contacts pyruvate. Catalysis depends on tyrosine 137, which acts as the Proton donor/acceptor. Lysine 166 (schiff-base intermediate with substrate) is an active-site residue. Isoleucine 208 contacts pyruvate.

The protein belongs to the DapA family. In terms of assembly, homotetramer; dimer of dimers.

Its subcellular location is the cytoplasm. It catalyses the reaction L-aspartate 4-semialdehyde + pyruvate = (2S,4S)-4-hydroxy-2,3,4,5-tetrahydrodipicolinate + H2O + H(+). It participates in amino-acid biosynthesis; L-lysine biosynthesis via DAP pathway; (S)-tetrahydrodipicolinate from L-aspartate: step 3/4. Functionally, catalyzes the condensation of (S)-aspartate-beta-semialdehyde [(S)-ASA] and pyruvate to 4-hydroxy-tetrahydrodipicolinate (HTPA). The polypeptide is 4-hydroxy-tetrahydrodipicolinate synthase (Chlorobaculum parvum (strain DSM 263 / NCIMB 8327) (Chlorobium vibrioforme subsp. thiosulfatophilum)).